The primary structure comprises 301 residues: Fructokinase (301 aa).

Zn(2+) contacts are provided by His165, Cys181, His184, and Cys187.

It belongs to the ROK (NagC/XylR) family. The cofactor is Mg(2+).

It catalyses the reaction D-fructose + ATP = D-fructose 6-phosphate + ADP + H(+). With respect to regulation, inhibition by zinc ions. This chain is Fructokinase (frk), found in Zymomonas mobilis subsp. mobilis (strain ATCC 31821 / ZM4 / CP4).